A 96-amino-acid polypeptide reads, in one-letter code: MAHHNGPRKKTRYKFKKDLRKRGIVPVTSLIQHFEIGQSVHIVCEPSIQKGMPHRRFHGKTGKVIGQRGRAWMLTIFDGNMEKIVIARPQHLKAQK.

The protein belongs to the eukaryotic ribosomal protein eL21 family.

The protein is Large ribosomal subunit protein eL21 of Methanosphaerula palustris (strain ATCC BAA-1556 / DSM 19958 / E1-9c).